A 500-amino-acid polypeptide reads, in one-letter code: L-arabinose isomerase (500 aa).

4 residues coordinate Mn(2+): E306, E333, H350, and H450.

The protein belongs to the arabinose isomerase family. In terms of assembly, homohexamer. It depends on Mn(2+) as a cofactor.

It catalyses the reaction beta-L-arabinopyranose = L-ribulose. The protein operates within carbohydrate degradation; L-arabinose degradation via L-ribulose; D-xylulose 5-phosphate from L-arabinose (bacterial route): step 1/3. Its function is as follows. Catalyzes the conversion of L-arabinose to L-ribulose. The chain is L-arabinose isomerase from Shigella flexneri.